The primary structure comprises 124 residues: Fluoride-specific ion channel FluC 2 (124 aa).

3 helical membrane passes run 36–56, 66–86, and 100–120; these read TFLI…YLAF, LFVM…SLDT, and LYAI…LALV. Residues G74 and T77 each coordinate Na(+).

It belongs to the fluoride channel Fluc/FEX (TC 1.A.43) family.

It localises to the cell inner membrane. It catalyses the reaction fluoride(in) = fluoride(out). Its activity is regulated as follows. Na(+) is not transported, but it plays an essential structural role and its presence is essential for fluoride channel function. Fluoride-specific ion channel. Important for reducing fluoride concentration in the cell, thus reducing its toxicity. This Nitrobacter hamburgensis (strain DSM 10229 / NCIMB 13809 / X14) protein is Fluoride-specific ion channel FluC 2.